We begin with the raw amino-acid sequence, 139 residues long: Translation initiation factor 2 subunit beta (139 aa).

This sequence belongs to the eIF-2-beta/eIF-5 family. Heterotrimer composed of an alpha, a beta and a gamma chain.

Its function is as follows. eIF-2 functions in the early steps of protein synthesis by forming a ternary complex with GTP and initiator tRNA. The protein is Translation initiation factor 2 subunit beta of Saccharolobus solfataricus (strain ATCC 35092 / DSM 1617 / JCM 11322 / P2) (Sulfolobus solfataricus).